The chain runs to 732 residues: Cullin-3B (732 aa).

The 63-residue stretch at 662–724 folds into the Cullin neddylation domain; the sequence is DRKPQIEAAI…RDFLERDNTD (63 aa). Lys-676 is covalently cross-linked (Glycyl lysine isopeptide (Lys-Gly) (interchain with G-Cter in NEDD8)).

The protein belongs to the cullin family. In terms of assembly, interacts with BTB/POZ-MATH proteins BPM1 and BPM3. Neddylated. Deneddylated via its interaction with the COP9 signalosome (CSN) complex.

The protein operates within protein modification; protein ubiquitination. Component of the cullin-RING ubiquitin ligases (CRL), or CUL3-RBX1-BTB protein E3 ligase complexes which mediate the ubiquitination and subsequent proteasomal degradation of target proteins. The functional specificity of the CRL complex depends on the BTB domain-containing protein as the substrate recognition component. Involved in embryo pattern formation and endosperm development. Required for the normal division and organization of the root stem cells and columella root cap cells. Regulates primary root growth by an unknown pathway, but in an ethylene-dependent manner. Functions in distal root patterning, by an ethylene-independent mechanism. Functionally redundant with CUL3A. The polypeptide is Cullin-3B (CUL3B) (Arabidopsis thaliana (Mouse-ear cress)).